We begin with the raw amino-acid sequence, 183 residues long: ATP synthase subunit delta (183 aa).

Belongs to the ATPase delta chain family. F-type ATPases have 2 components, F(1) - the catalytic core - and F(0) - the membrane proton channel. F(1) has five subunits: alpha(3), beta(3), gamma(1), delta(1), epsilon(1). F(0) has three main subunits: a(1), b(2) and c(10-14). The alpha and beta chains form an alternating ring which encloses part of the gamma chain. F(1) is attached to F(0) by a central stalk formed by the gamma and epsilon chains, while a peripheral stalk is formed by the delta and b chains.

It is found in the cell inner membrane. Its function is as follows. F(1)F(0) ATP synthase produces ATP from ADP in the presence of a proton or sodium gradient. F-type ATPases consist of two structural domains, F(1) containing the extramembraneous catalytic core and F(0) containing the membrane proton channel, linked together by a central stalk and a peripheral stalk. During catalysis, ATP synthesis in the catalytic domain of F(1) is coupled via a rotary mechanism of the central stalk subunits to proton translocation. In terms of biological role, this protein is part of the stalk that links CF(0) to CF(1). It either transmits conformational changes from CF(0) to CF(1) or is implicated in proton conduction. The protein is ATP synthase subunit delta of Ruthia magnifica subsp. Calyptogena magnifica.